We begin with the raw amino-acid sequence, 252 residues long: Triosephosphate isomerase (252 aa).

10-12 is a substrate binding site; it reads NWK. Residue histidine 96 is the Electrophile of the active site. Residue glutamate 168 is the Proton acceptor of the active site. Substrate-binding positions include glycine 174, serine 214, and 235–236; that span reads GG.

The protein belongs to the triosephosphate isomerase family. Homodimer.

It is found in the cytoplasm. The enzyme catalyses D-glyceraldehyde 3-phosphate = dihydroxyacetone phosphate. Its pathway is carbohydrate biosynthesis; gluconeogenesis. It functions in the pathway carbohydrate degradation; glycolysis; D-glyceraldehyde 3-phosphate from glycerone phosphate: step 1/1. Its function is as follows. Involved in the gluconeogenesis. Catalyzes stereospecifically the conversion of dihydroxyacetone phosphate (DHAP) to D-glyceraldehyde-3-phosphate (G3P). In Streptococcus pyogenes serotype M2 (strain MGAS10270), this protein is Triosephosphate isomerase.